The primary structure comprises 381 residues: Queuine tRNA-ribosyltransferase (381 aa).

The active-site Proton acceptor is the Asp92. Substrate contacts are provided by residues 92 to 96 (DSGGF), Asp146, Gln190, and Gly217. The interval 248–254 (GVGRPED) is RNA binding. Asp267 functions as the Nucleophile in the catalytic mechanism. The tract at residues 272-276 (TRNAR) is RNA binding; important for wobble base 34 recognition. Zn(2+) is bound by residues Cys305, Cys307, Cys310, and His337.

The protein belongs to the queuine tRNA-ribosyltransferase family. As to quaternary structure, homodimer. Within each dimer, one monomer is responsible for RNA recognition and catalysis, while the other monomer binds to the replacement base PreQ1. Zn(2+) is required as a cofactor.

It catalyses the reaction 7-aminomethyl-7-carbaguanine + guanosine(34) in tRNA = 7-aminomethyl-7-carbaguanosine(34) in tRNA + guanine. Its pathway is tRNA modification; tRNA-queuosine biosynthesis. Its function is as follows. Catalyzes the base-exchange of a guanine (G) residue with the queuine precursor 7-aminomethyl-7-deazaguanine (PreQ1) at position 34 (anticodon wobble position) in tRNAs with GU(N) anticodons (tRNA-Asp, -Asn, -His and -Tyr). Catalysis occurs through a double-displacement mechanism. The nucleophile active site attacks the C1' of nucleotide 34 to detach the guanine base from the RNA, forming a covalent enzyme-RNA intermediate. The proton acceptor active site deprotonates the incoming PreQ1, allowing a nucleophilic attack on the C1' of the ribose to form the product. After dissociation, two additional enzymatic reactions on the tRNA convert PreQ1 to queuine (Q), resulting in the hypermodified nucleoside queuosine (7-(((4,5-cis-dihydroxy-2-cyclopenten-1-yl)amino)methyl)-7-deazaguanosine). The polypeptide is Queuine tRNA-ribosyltransferase (Xanthomonas axonopodis pv. citri (strain 306)).